The chain runs to 291 residues: Protease HtpX (291 aa).

Transmembrane regions (helical) follow at residues Ile4–Ile24 and Leu36–Leu56. His143 contacts Zn(2+). Residue Glu144 is part of the active site. His147 serves as a coordination point for Zn(2+). 2 consecutive transmembrane segments (helical) span residues Gly151–Ser171 and Phe199–Trp219. A Zn(2+)-binding site is contributed by Glu225.

The protein belongs to the peptidase M48B family. Zn(2+) serves as cofactor.

The protein localises to the cell inner membrane. The sequence is that of Protease HtpX from Aliivibrio salmonicida (strain LFI1238) (Vibrio salmonicida (strain LFI1238)).